The sequence spans 332 residues: Small ribosomal subunit biogenesis GTPase RsgA (332 aa).

One can recognise a CP-type G domain in the interval 103–259 (RQQLIAANLD…LIDTPGMREL (157 aa)). Residues 148–151 (TKVD) and 201–209 (GSSGAGKST) contribute to the GTP site. Cysteine 281, cysteine 286, histidine 288, and cysteine 294 together coordinate Zn(2+).

This sequence belongs to the TRAFAC class YlqF/YawG GTPase family. RsgA subfamily. As to quaternary structure, monomer. Associates with 30S ribosomal subunit, binds 16S rRNA. Requires Zn(2+) as cofactor.

It localises to the cytoplasm. Its function is as follows. One of several proteins that assist in the late maturation steps of the functional core of the 30S ribosomal subunit. Helps release RbfA from mature subunits. May play a role in the assembly of ribosomal proteins into the subunit. Circularly permuted GTPase that catalyzes slow GTP hydrolysis, GTPase activity is stimulated by the 30S ribosomal subunit. The sequence is that of Small ribosomal subunit biogenesis GTPase RsgA from Xylella fastidiosa (strain M12).